Here is a 716-residue protein sequence, read N- to C-terminus: Putative proline--tRNA ligase C19C7.06 (716 aa).

Positions Lys-655–Gly-675 are disordered.

It belongs to the class-II aminoacyl-tRNA synthetase family.

The protein localises to the cytoplasm. It carries out the reaction tRNA(Pro) + L-proline + ATP = L-prolyl-tRNA(Pro) + AMP + diphosphate. In Schizosaccharomyces pombe (strain 972 / ATCC 24843) (Fission yeast), this protein is Putative proline--tRNA ligase C19C7.06 (prs1).